Here is a 123-residue protein sequence, read N- to C-terminus: Unknown 12C protein (123 aa).

Residues 1–17 (MMSALFLVLSVSLLVSG) form the signal peptide.

In terms of processing, contains 6 disulfide bonds. In terms of tissue distribution, expressed in acontia, a specialised envenomation structure laden with batteries of venom-containing nematocysts found only in the superfamily Metridioidea.

It is found in the secreted. The protein resides in the nematocyst. Cysteine-rich protein with probable toxin activity. The chain is Unknown 12C protein from Calliactis polypus (Hermit crab anemone).